Consider the following 305-residue polypeptide: Outer membrane protein assembly factor BamD (305 aa).

The signal sequence occupies residues 1–24 (MLRIFQGRPAVTIAAVLVAASVAG). Cys25 carries the N-palmitoyl cysteine lipid modification. Cys25 carries the S-diacylglycerol cysteine lipid modification. TPR repeat units lie at residues 41–74 (VELL…HPYS), 78–111 (RRSI…YPGN), 113–136 (SAQY…NRDQ), and 174–207 (AGKE…HQTT).

Belongs to the BamD family. In terms of assembly, part of the Bam complex.

The protein resides in the cell outer membrane. Functionally, part of the outer membrane protein assembly complex, which is involved in assembly and insertion of beta-barrel proteins into the outer membrane. The chain is Outer membrane protein assembly factor BamD from Caulobacter vibrioides (strain ATCC 19089 / CIP 103742 / CB 15) (Caulobacter crescentus).